Here is a 473-residue protein sequence, read N- to C-terminus: 3-isopropylmalate dehydratase large subunit 2 (473 aa).

C350, C410, and C413 together coordinate [4Fe-4S] cluster.

Belongs to the aconitase/IPM isomerase family. LeuC type 1 subfamily. Heterodimer of LeuC and LeuD. [4Fe-4S] cluster serves as cofactor.

The enzyme catalyses (2R,3S)-3-isopropylmalate = (2S)-2-isopropylmalate. It functions in the pathway amino-acid biosynthesis; L-leucine biosynthesis; L-leucine from 3-methyl-2-oxobutanoate: step 2/4. In terms of biological role, catalyzes the isomerization between 2-isopropylmalate and 3-isopropylmalate, via the formation of 2-isopropylmaleate. In Salmonella choleraesuis (strain SC-B67), this protein is 3-isopropylmalate dehydratase large subunit 2.